Here is a 342-residue protein sequence, read N- to C-terminus: Aristolochene synthase prx2 (342 aa).

Mg(2+) contacts are provided by Asp-115, Asn-244, Ser-248, and Glu-252. Arg-340 and Tyr-341 together coordinate (2E,6E)-farnesyl diphosphate.

This sequence belongs to the terpene synthase family. As to quaternary structure, homodimer. It depends on Mg(2+) as a cofactor.

The catalysed reaction is (2E,6E)-farnesyl diphosphate = (+)-aristolochene + diphosphate. It functions in the pathway sesquiterpene biosynthesis; aristolochene biosynthesis; aristolochene from farnesyl diphosphate: step 1/1. Its function is as follows. Aristolochene synthase; part of the gene cluster that mediates the biosynthesis of PR-toxin, a bicyclic sesquiterpene belonging to the eremophilane class and acting as a mycotoxin. The first step of the pathway is catalyzed by the aristolochene synthase which performs the cyclization of trans,trans-farnesyl diphosphate (FPP) to the bicyclic sesquiterpene aristolochene. Following the formation of aristolochene, the non-oxygenated aristolochene is converted to the trioxygenated intermediate eremofortin B, via 7-epi-neopetasone. This conversion appears to involve three enzymes, a hydroxysterol oxidase-like enzyme, the quinone-oxidase prx3 that forms the quinone-type-structure in the bicyclic nucleus of aristolochene with the C8-oxo group and the C-3 hydroxyl group, and the P450 monooxygenase prx9 that introduces the epoxide at the double bond between carbons 1 and 2. No monoxy or dioxy-intermediates have been reported to be released to the broth, so these three early oxidative reactions may be coupled together. Eremofortin B is further oxidized by another P450 monooxygenase, that introduces a second epoxide between carbons 7 and 11 prior to acetylation to eremofortin A by the acetyltransferase prx11. The second epoxidation may be performed by a second P450 monooxygenase. After the acetylation step, the conversion of eremofortin A to eremofortin C and then to PR-toxin requires only two enzymes. First the conversion of eremofortin A to eremofortin C proceeds by oxidation of the side chain of the molecule at C-12 and is catalyzed by the short-chain oxidoreductase prx1. The cytochrome P450 monooxygenase prx8 also plays a role in this step. The primary alcohol formed at C-12 is finally oxidized by the short-chain alcohol dehydrogenase prx4 that forms PR-toxin. This chain is Aristolochene synthase prx2, found in Penicillium rubens (strain ATCC 28089 / DSM 1075 / NRRL 1951 / Wisconsin 54-1255) (Penicillium chrysogenum).